A 255-amino-acid chain; its full sequence is F-box only protein 44 (255 aa).

Positions 3–50 (VGNINELPENILLELFTHVPARQLLLNCRLVCSLWRDLIDLVTLWKRK) constitute an F-box domain. In terms of domain architecture, FBA spans 71 to 252 (FYFLRSLHRN…VTNSSITIGP (182 aa)).

In terms of assembly, part of a SCF (SKP1-cullin-F-box) protein ligase complex. Interacts with SKP1 and CUL1. In terms of tissue distribution, abundantly expressed in brain and kidney. Expressed at lower levels in heart, spleen and liver.

Substrate-recognition component of the SCF (SKP1-CUL1-F-box protein)-type E3 ubiquitin ligase complex. In Homo sapiens (Human), this protein is F-box only protein 44 (FBXO44).